The following is a 240-amino-acid chain: tRNA pseudouridine synthase A (240 aa).

The active-site Nucleophile is the aspartate 50. Tyrosine 109 provides a ligand contact to substrate.

It belongs to the tRNA pseudouridine synthase TruA family. In terms of assembly, homodimer.

It carries out the reaction uridine(38/39/40) in tRNA = pseudouridine(38/39/40) in tRNA. Its function is as follows. Formation of pseudouridine at positions 38, 39 and 40 in the anticodon stem and loop of transfer RNAs. The protein is tRNA pseudouridine synthase A of Campylobacter jejuni (strain RM1221).